The primary structure comprises 151 residues: MSKESKITLIGSKLAKTGGEFIYLGEIEECKNCKFKRLCHGNLEVGRKYKIVSVRSANHPCIVHEGGVKVVEVVLADLTIMIESKKALEGVVLNHEPITCDNFDCEYYSFCNSEGIKEGEKYKIKQVLNEKINCPFGNSLKKVIVELVENK.

Belongs to the UPF0179 family.

This chain is UPF0179 protein MJ1627, found in Methanocaldococcus jannaschii (strain ATCC 43067 / DSM 2661 / JAL-1 / JCM 10045 / NBRC 100440) (Methanococcus jannaschii).